Consider the following 809-residue polypeptide: WD repeat protein iqw1 (809 aa).

5 WD repeats span residues 43-82 (GHTG…KPRH), 87-128 (GHVQ…EGGM), 141-180 (CALD…VCNQ), 193-233 (PYRI…KSFR), and 241-295 (SPEK…LFHV). The segment at 599–644 (SMYTGHSDLNDDDDDYQDEESYSYASDDDDESDEDSDEGPTLLSLR) is disordered. A compositionally biased stretch (acidic residues) spans 608-636 (NDDDDDYQDEESYSYASDDDDESDEDSDE). 2 WD repeats span residues 668–708 (CNVE…ILAI) and 711–750 (GDSE…PSGC).

Interacts with ddb1.

Its subcellular location is the cytoplasm. Its function is as follows. Ligand-dependent coactivator of nuclear receptors that may function as a substrate receptor for CUL4-DDB1 E3 ubiquitin-protein ligase complex. The polypeptide is WD repeat protein iqw1 (iqw1) (Schizosaccharomyces pombe (strain 972 / ATCC 24843) (Fission yeast)).